A 142-amino-acid polypeptide reads, in one-letter code: Succinate dehydrogenase subunit 6, mitochondrial (142 aa).

In terms of assembly, component of complex II composed of eight subunits in plants: four classical SDH subunits SDH1, SDH2, SDH3 and SDH4 (a flavoprotein (FP), an iron-sulfur protein (IP), and a cytochrome b composed of a large and a small subunit.), as well as four subunits unknown in mitochondria from bacteria and heterotrophic eukaryotes.

Its subcellular location is the mitochondrion inner membrane. It participates in carbohydrate metabolism; tricarboxylic acid cycle. The sequence is that of Succinate dehydrogenase subunit 6, mitochondrial from Oryza sativa subsp. japonica (Rice).